Here is a 573-residue protein sequence, read N- to C-terminus: Probable CoA ligase CCL13 (573 aa).

ATP contacts are provided by residues 216–224 (TSGTTARPK), 352–357 (HIYGLT), D449, 461–464 (LKDR), and K556. Positions 284 to 352 (SPKAIFDNIH…MEEMGFQVNH (69 aa)) are SBD1. The tract at residues 353–429 (IYGLTETHGP…FRGNTVMSGY (77 aa)) is SBD2.

It belongs to the ATP-dependent AMP-binding enzyme family.

The protein localises to the cytoplasm. The protein resides in the cytosol. This Humulus lupulus (European hop) protein is Probable CoA ligase CCL13.